A 363-amino-acid polypeptide reads, in one-letter code: Biotin synthase (363 aa).

In terms of domain architecture, Radical SAM core spans 38–266 (NTVQVSTLLS…ETQVRLSAGR (229 aa)). Residues Cys-53, Cys-57, and Cys-60 each contribute to the [4Fe-4S] cluster site. The [2Fe-2S] cluster site is built by Cys-97, Cys-129, Cys-189, and Arg-261. Positions 315–363 (KAFEKKSQPESVAAEKSKYQSQGEKPRWSRPEHKIDRNLEAQQNAKTKA) are disordered. A compositionally biased stretch (basic and acidic residues) spans 316-353 (AFEKKSQPESVAAEKSKYQSQGEKPRWSRPEHKIDRNL). Residues 354–363 (EAQQNAKTKA) are compositionally biased toward polar residues.

The protein belongs to the radical SAM superfamily. Biotin synthase family. In terms of assembly, homodimer. [4Fe-4S] cluster is required as a cofactor. It depends on [2Fe-2S] cluster as a cofactor.

It carries out the reaction (4R,5S)-dethiobiotin + (sulfur carrier)-SH + 2 reduced [2Fe-2S]-[ferredoxin] + 2 S-adenosyl-L-methionine = (sulfur carrier)-H + biotin + 2 5'-deoxyadenosine + 2 L-methionine + 2 oxidized [2Fe-2S]-[ferredoxin]. It participates in cofactor biosynthesis; biotin biosynthesis; biotin from 7,8-diaminononanoate: step 2/2. Catalyzes the conversion of dethiobiotin (DTB) to biotin by the insertion of a sulfur atom into dethiobiotin via a radical-based mechanism. The sequence is that of Biotin synthase from Christiangramia forsetii (strain DSM 17595 / CGMCC 1.15422 / KT0803) (Gramella forsetii).